A 153-amino-acid polypeptide reads, in one-letter code: Arginine repressor (153 aa).

The protein belongs to the ArgR family.

The protein localises to the cytoplasm. Its pathway is amino-acid biosynthesis; L-arginine biosynthesis [regulation]. Functionally, regulates arginine biosynthesis genes. The sequence is that of Arginine repressor from Haemophilus ducreyi (strain 35000HP / ATCC 700724).